The following is a 418-amino-acid chain: Glutamyl-tRNA reductase (418 aa).

Substrate contacts are provided by residues 49–52 (TCNR), Ser109, 114–116 (EPQ), and Gln120. Residue Cys50 is the Nucleophile of the active site. 189–194 (GAGETI) is a binding site for NADP(+).

Belongs to the glutamyl-tRNA reductase family. In terms of assembly, homodimer.

The enzyme catalyses (S)-4-amino-5-oxopentanoate + tRNA(Glu) + NADP(+) = L-glutamyl-tRNA(Glu) + NADPH + H(+). It functions in the pathway porphyrin-containing compound metabolism; protoporphyrin-IX biosynthesis; 5-aminolevulinate from L-glutamyl-tRNA(Glu): step 1/2. Functionally, catalyzes the NADPH-dependent reduction of glutamyl-tRNA(Glu) to glutamate 1-semialdehyde (GSA). In Escherichia coli O6:K15:H31 (strain 536 / UPEC), this protein is Glutamyl-tRNA reductase.